A 101-amino-acid chain; its full sequence is Urinary protein 2 (101 aa).

The N-terminal stretch at 1-21 is a signal peptide; sequence MGKHILLLPLGLSLLMSSLLA. Residues 22 to 99 enclose the UPAR/Ly6 domain; that stretch reads LQCFRCTSFD…CSATPFCNMV (78 aa). 5 disulfide bridges follow: Cys24/Cys51, Cys27/Cys36, Cys43/Cys70, Cys73/Cys89, and Cys90/Cys96. 2 N-linked (GlcNAc...) asparagine glycosylation sites follow: Asn67 and Asn74.

N-glycosylated.

The protein resides in the secreted. The protein is Urinary protein 2 of Rattus norvegicus (Rat).